Reading from the N-terminus, the 312-residue chain is Porphobilinogen deaminase (312 aa).

C235 is modified (S-(dipyrrolylmethanemethyl)cysteine).

The protein belongs to the HMBS family. Monomer. Requires dipyrromethane as cofactor.

It catalyses the reaction 4 porphobilinogen + H2O = hydroxymethylbilane + 4 NH4(+). The protein operates within porphyrin-containing compound metabolism; protoporphyrin-IX biosynthesis; coproporphyrinogen-III from 5-aminolevulinate: step 2/4. Functionally, tetrapolymerization of the monopyrrole PBG into the hydroxymethylbilane pre-uroporphyrinogen in several discrete steps. This chain is Porphobilinogen deaminase, found in Mycolicibacterium gilvum (strain PYR-GCK) (Mycobacterium gilvum (strain PYR-GCK)).